Reading from the N-terminus, the 253-residue chain is tRNA pseudouridine synthase A (253 aa).

The active-site Nucleophile is the aspartate 53. Tyrosine 111 is a binding site for substrate.

It belongs to the tRNA pseudouridine synthase TruA family. Homodimer.

The enzyme catalyses uridine(38/39/40) in tRNA = pseudouridine(38/39/40) in tRNA. Its function is as follows. Formation of pseudouridine at positions 38, 39 and 40 in the anticodon stem and loop of transfer RNAs. The protein is tRNA pseudouridine synthase A of Chlorobium luteolum (strain DSM 273 / BCRC 81028 / 2530) (Pelodictyon luteolum).